A 345-amino-acid chain; its full sequence is NADH-quinone oxidoreductase subunit H (345 aa).

The next 8 helical transmembrane spans lie at 14 to 34, 84 to 104, 115 to 135, 161 to 181, 187 to 207, 248 to 268, 277 to 297, and 309 to 329; these read IILA…LFLV, FILA…VIPF, VAIL…IMGG, IGLI…GDIV, GWGF…LFFI, YIAI…GWLS, VLWM…VKAI, and LGWK…AFAA.

Belongs to the complex I subunit 1 family. As to quaternary structure, NDH-1 is composed of 14 different subunits. Subunits NuoA, H, J, K, L, M, N constitute the membrane sector of the complex.

The protein localises to the cell inner membrane. The enzyme catalyses a quinone + NADH + 5 H(+)(in) = a quinol + NAD(+) + 4 H(+)(out). In terms of biological role, NDH-1 shuttles electrons from NADH, via FMN and iron-sulfur (Fe-S) centers, to quinones in the respiratory chain. The immediate electron acceptor for the enzyme in this species is believed to be ubiquinone. Couples the redox reaction to proton translocation (for every two electrons transferred, four hydrogen ions are translocated across the cytoplasmic membrane), and thus conserves the redox energy in a proton gradient. This subunit may bind ubiquinone. This chain is NADH-quinone oxidoreductase subunit H, found in Ruegeria pomeroyi (strain ATCC 700808 / DSM 15171 / DSS-3) (Silicibacter pomeroyi).